Here is a 543-residue protein sequence, read N- to C-terminus: T-complex protein 1 subunit gamma (543 aa).

This sequence belongs to the TCP-1 chaperonin family.

It is found in the cytoplasm. Molecular chaperone; assists the folding of proteins upon ATP hydrolysis. Known to play a role, in vitro, in the folding of actin and tubulin. Plays a role in microtubule polymerization. This Caenorhabditis elegans protein is T-complex protein 1 subunit gamma.